We begin with the raw amino-acid sequence, 328 residues long: ABC transporter I family member 20 (328 aa).

Positions 14 to 257 (VEISGLRFTY…SKKSLMRTVE (244 aa)) constitute an ABC transporter domain. 55 to 62 (GSNGAGKT) is a binding site for ATP. The disordered stretch occupies residues 263–295 (ERDEERKRRKERKANGLPEFETRTEESRVTGDP). A compositionally biased stretch (basic and acidic residues) spans 282 to 291 (FETRTEESRV).

The protein belongs to the ABC transporter superfamily. ABCI family.

It localises to the cytoplasm. This is ABC transporter I family member 20 (ABCI20) from Arabidopsis thaliana (Mouse-ear cress).